Reading from the N-terminus, the 126-residue chain is Protein Wnt-1 (126 aa).

Residue S1 is the site of O-palmitoleoyl serine; by PORCN attachment. C92 and C107 form a disulfide bridge. 2 N-linked (GlcNAc...) asparagine glycosylation sites follow: N93 and N94.

Belongs to the Wnt family. Palmitoleoylation is required for efficient binding to frizzled receptors. Palmitoleoylation is necessary for proper trafficking to cell surface. Depalmitoleoylated by NOTUM, leading to inhibit Wnt signaling pathway.

Its subcellular location is the secreted. It is found in the extracellular space. The protein resides in the extracellular matrix. Its function is as follows. Ligand for members of the frizzled family of seven transmembrane receptors. Probable developmental protein. The polypeptide is Protein Wnt-1 (WNT-1) (Alopias vulpinus (Common thresher shark)).